We begin with the raw amino-acid sequence, 550 residues long: Cytokinin dehydrogenase 10 (550 aa).

The N-terminal stretch at 1 to 26 is a signal peptide; it reads MMPRAQLTTFLIVTSFLSTVPYLRAP. Residues 64 to 245 enclose the FAD-binding PCMH-type domain; sequence VHATPNGVFR…TRARIRLEPA (182 aa). Positions 100, 101, and 102 each coordinate FAD. His103 is modified (pros-8alpha-FAD histidine). 7 residues coordinate FAD: Ser104, Gln108, Asp169, Thr174, Ser180, Ile184, and Ile235. The N-linked (GlcNAc...) asparagine glycan is linked to Asn289. Tyr489, Ser524, and Gln527 together coordinate FAD. Residues 523-550 are disordered; that stretch reads LSPGQGIFPPPPPPSPPPPAAGEPITAS. Residues 530–543 show a composition bias toward pro residues; the sequence is FPPPPPPSPPPPAA.

This sequence belongs to the oxygen-dependent FAD-linked oxidoreductase family. As to quaternary structure, monomer. Requires FAD as cofactor.

The protein localises to the secreted. It is found in the extracellular space. The enzyme catalyses N(6)-dimethylallyladenine + A + H2O = 3-methyl-2-butenal + adenine + AH2. Catalyzes the oxidation of cytokinins, a family of N(6)-substituted adenine derivatives that are plant hormones, where the substituent is an isopentenyl group. This is Cytokinin dehydrogenase 10 (CKX10) from Oryza sativa subsp. japonica (Rice).